Reading from the N-terminus, the 274-residue chain is Speedy protein C (274 aa).

Residues 37–169 form a speedy/Ringo box; Required for CDK-binding region; sequence HQEVQAFLSL…FHWAWTRDRR (133 aa).

Belongs to the Speedy/Ringo family. Interacts with CDK1 and CDK2. Interacts with AURKB. In terms of tissue distribution, expressed in a variety of tissues including bone marrow, kidney, small intestine, liver, placenta and testis.

The protein resides in the cytoplasm. Its function is as follows. Promotes progression through the cell cycle via binding and activation of CDK1 and CDK2. Involved in the spindle-assembly checkpoint. Required for recruitment of MAD2L1, BUBR1 and BUB1 to kinetochores. Required for the correct localization of the active form of Aurora B in prometaphase. This chain is Speedy protein C, found in Homo sapiens (Human).